The sequence spans 366 residues: G kinase-anchoring protein 1 (366 aa).

Positions 1 to 95 (MASAVLSSVP…SHAVCNAQHD (95 aa)) are interaction with IRS1. Disordered stretches follow at residues 20 to 110 (QVDS…REEN) and 147 to 177 (EYEDAENTSTQSKVMNKKDKRKNHQGKDRPL). Phosphoserine occurs at positions 23, 25, and 27. Positions 39-50 (TGKSQTLGSKST) are enriched in polar residues. A coiled-coil region spans residues 47 to 77 (SKSTTNEKKREKRRKKKEQQQSEANELRNLA). Phosphoserine; by PKG is present on Ser106. Coiled-coil stretches lie at residues 128–160 (ADLEKALLLSKLEYEEHKKEYEDAENTSTQSKV) and 243–353 (EHNQ…YQGG).

Belongs to the GKAP1 family. In terms of assembly, interacts with PRKG1 and IRS1.

The protein localises to the golgi apparatus. Regulates insulin-dependent IRS1 tyrosine phosphorylation in adipocytes by modulating the availability of IRS1 to IR tyrosine kinase. Its association with IRS1 is required for insulin-induced translocation of SLC2A4 to the cell membrane. Involved in TNF-induced impairment of insulin-dependent IRS1 tyrosine phosphorylation. This is G kinase-anchoring protein 1 (GKAP1) from Homo sapiens (Human).